We begin with the raw amino-acid sequence, 212 residues long: Acyl-homoserine-lactone synthase (212 aa).

Belongs to the autoinducer synthase family.

It carries out the reaction a fatty acyl-[ACP] + S-adenosyl-L-methionine = an N-acyl-L-homoserine lactone + S-methyl-5'-thioadenosine + holo-[ACP] + H(+). Functionally, required for the synthesis of OHHL (N-(3-oxohexanoyl)-L-homoserine lactone), an autoinducer molecule which binds to TraR and thus acts in the control of conjugal transfer. The polypeptide is Acyl-homoserine-lactone synthase (traI) (Rhizobium radiobacter (Agrobacterium tumefaciens)).